A 193-amino-acid polypeptide reads, in one-letter code: NADH-quinone oxidoreductase subunit B (193 aa).

Positions 72, 73, 137, and 167 each coordinate [4Fe-4S] cluster.

It belongs to the complex I 20 kDa subunit family. NDH-1 is composed of 14 different subunits. Subunits NuoB, C, D, E, F, and G constitute the peripheral sector of the complex. It depends on [4Fe-4S] cluster as a cofactor.

It is found in the cell inner membrane. The enzyme catalyses a quinone + NADH + 5 H(+)(in) = a quinol + NAD(+) + 4 H(+)(out). Its function is as follows. NDH-1 shuttles electrons from NADH, via FMN and iron-sulfur (Fe-S) centers, to quinones in the respiratory chain. The immediate electron acceptor for the enzyme in this species is believed to be ubiquinone. Couples the redox reaction to proton translocation (for every two electrons transferred, four hydrogen ions are translocated across the cytoplasmic membrane), and thus conserves the redox energy in a proton gradient. The sequence is that of NADH-quinone oxidoreductase subunit B from Bradyrhizobium sp. (strain ORS 278).